A 219-amino-acid polypeptide reads, in one-letter code: ATP synthase subunit a (219 aa).

6 consecutive transmembrane segments (helical) span residues 16-36 (LSNW…FWLI), 57-79 (LLMG…FILF), 96-116 (LAVT…YTWI), 122-142 (ALAH…MVLM), 158-178 (LAAN…QGTL), and 184-204 (TSIV…VAII).

It belongs to the ATPase A chain family. F-type ATPases have 2 components, CF(1) - the catalytic core - and CF(0) - the membrane proton channel. CF(1) has five subunits: alpha(3), beta(3), gamma(1), delta(1), epsilon(1). CF(0) has three main subunits: a, b and c.

The protein resides in the mitochondrion inner membrane. Functionally, mitochondrial membrane ATP synthase (F(1)F(0) ATP synthase or Complex V) produces ATP from ADP in the presence of a proton gradient across the membrane which is generated by electron transport complexes of the respiratory chain. F-type ATPases consist of two structural domains, F(1) - containing the extramembraneous catalytic core and F(0) - containing the membrane proton channel, linked together by a central stalk and a peripheral stalk. During catalysis, ATP synthesis in the catalytic domain of F(1) is coupled via a rotary mechanism of the central stalk subunits to proton translocation. Key component of the proton channel; it may play a direct role in the translocation of protons across the membrane. The chain is ATP synthase subunit a (ATP6) from Artemia franciscana (Brine shrimp).